A 181-amino-acid chain; its full sequence is Early E3 20.3 kDa glycoprotein (181 aa).

N-linked (GlcNAc...) asparagine; by host glycans are attached at residues N29, N57, N70, and N75.

The protein belongs to the adenoviridae E3_20 family.

Functionally, E3 proteins seem to be dispensable for virus growth in tissue culture cells. They are potentially important for virus growth under special conditions; E3 region may help adenoviruses to evade the immune surveillance of the host. The protein is Early E3 20.3 kDa glycoprotein of Human adenovirus B serotype 11 (strain Slobiski) (HAdV-11).